Consider the following 493-residue polypeptide: 3-octaprenyl-4-hydroxybenzoate carboxy-lyase (493 aa).

Asn175 is a Mn(2+) binding site. Prenylated FMN contacts are provided by residues Ile178–Arg180, Arg192–Leu194, and Arg197–Gly198. Glu241 is a Mn(2+) binding site. Asp290 (proton donor) is an active-site residue.

This sequence belongs to the UbiD family. As to quaternary structure, homohexamer. It depends on prenylated FMN as a cofactor. Mn(2+) is required as a cofactor.

It is found in the cell membrane. The catalysed reaction is a 4-hydroxy-3-(all-trans-polyprenyl)benzoate + H(+) = a 2-(all-trans-polyprenyl)phenol + CO2. Its pathway is cofactor biosynthesis; ubiquinone biosynthesis. Its function is as follows. Catalyzes the decarboxylation of 3-octaprenyl-4-hydroxy benzoate to 2-octaprenylphenol, an intermediate step in ubiquinone biosynthesis. The protein is 3-octaprenyl-4-hydroxybenzoate carboxy-lyase of Photorhabdus laumondii subsp. laumondii (strain DSM 15139 / CIP 105565 / TT01) (Photorhabdus luminescens subsp. laumondii).